The sequence spans 93 residues: Large ribosomal subunit protein uL23cz/uL23cy (93 aa).

It belongs to the universal ribosomal protein uL23 family. Part of the 50S ribosomal subunit.

Its subcellular location is the plastid. It is found in the chloroplast. Functionally, binds to 23S rRNA. The chain is Large ribosomal subunit protein uL23cz/uL23cy (rpl23-A) from Atropa belladonna (Belladonna).